Here is a 191-residue protein sequence, read N- to C-terminus: MTDPILSLKERLSGRSIYLIGMMGSGKTSTGRPLAKRLGYGFVDADAVIEQVAGCTIPEIFERDGEAGFRSIESQVLNAISQRHSLVVATGGGVVTKPENWGQLHSGIVVWLDVNRAQLIERLRDDSTQRPLLQQPNPEAALDTLLQERRPLYGEADLTVVIKDESPDAVADGILQLLPTLIKDPTEQRER.

24-29 (GSGKTS) contributes to the ATP binding site. T28 lines the Mg(2+) pocket. Substrate-binding residues include D46, R70, and G92. R130 is an ATP binding site. R149 is a binding site for substrate.

It belongs to the shikimate kinase family. In terms of assembly, monomer. Mg(2+) is required as a cofactor.

The protein resides in the cytoplasm. The catalysed reaction is shikimate + ATP = 3-phosphoshikimate + ADP + H(+). It functions in the pathway metabolic intermediate biosynthesis; chorismate biosynthesis; chorismate from D-erythrose 4-phosphate and phosphoenolpyruvate: step 5/7. In terms of biological role, catalyzes the specific phosphorylation of the 3-hydroxyl group of shikimic acid using ATP as a cosubstrate. The protein is Shikimate kinase of Synechococcus sp. (strain CC9902).